The following is a 114-amino-acid chain: uncharacterized protein (114 aa).

Cys40, Cys106, and Cys108 together coordinate Fe cation.

It belongs to the HesB/IscA family. Ycf83 subfamily.

It localises to the plastid. The protein resides in the chloroplast. This is an uncharacterized protein from Pyropia yezoensis (Susabi-nori).